Reading from the N-terminus, the 135-residue chain is Fluoride-specific ion channel FluC (135 aa).

The next 4 membrane-spanning stretches (helical) occupy residues Phe-12–Ser-32, Leu-42–Phe-62, Leu-70–Phe-90, and Ala-106–Leu-126. 2 residues coordinate Na(+): Gly-82 and Thr-85.

This sequence belongs to the fluoride channel Fluc/FEX (TC 1.A.43) family.

The protein localises to the cell inner membrane. It catalyses the reaction fluoride(in) = fluoride(out). Its activity is regulated as follows. Na(+) is not transported, but it plays an essential structural role and its presence is essential for fluoride channel function. Fluoride-specific ion channel. Important for reducing fluoride concentration in the cell, thus reducing its toxicity. In Dechloromonas aromatica (strain RCB), this protein is Fluoride-specific ion channel FluC.